The sequence spans 172 residues: Adenine phosphoribosyltransferase (172 aa).

Belongs to the purine/pyrimidine phosphoribosyltransferase family. Homodimer.

It localises to the cytoplasm. The catalysed reaction is AMP + diphosphate = 5-phospho-alpha-D-ribose 1-diphosphate + adenine. It functions in the pathway purine metabolism; AMP biosynthesis via salvage pathway; AMP from adenine: step 1/1. In terms of biological role, catalyzes a salvage reaction resulting in the formation of AMP, that is energically less costly than de novo synthesis. This Polynucleobacter asymbioticus (strain DSM 18221 / CIP 109841 / QLW-P1DMWA-1) (Polynucleobacter necessarius subsp. asymbioticus) protein is Adenine phosphoribosyltransferase.